The following is a 328-amino-acid chain: Serine protease 27 (328 aa).

Residues 1-22 (MRQPHITALLLLPLLLRSGTEG) form the signal peptide. The propeptide at 23 to 37 (AEAMRACGHPRMFNR) is activation peptide. One can recognise a Peptidase S1 domain in the interval 38–280 (MVGGEDALEG…HYQWIHQIIP (243 aa)). Cysteines 63 and 79 form a disulfide. The Charge relay system role is filled by His78. Asn82 is a glycosylation site (N-linked (GlcNAc...) asparagine). Asp127 functions as the Charge relay system in the catalytic mechanism. 3 disulfide bridges follow: Cys161–Cys238, Cys194–Cys217, and Cys228–Cys256. Ser232 serves as the catalytic Charge relay system.

The protein belongs to the peptidase S1 family.

It is found in the secreted. The sequence is that of Serine protease 27 (Prss27) from Rattus norvegicus (Rat).